Here is a 210-residue protein sequence, read N- to C-terminus: Phosphoribosyl-dephospho-CoA transferase (210 aa).

Residues aspartate 135 and aspartate 137 contribute to the active site.

It belongs to the MdcG family.

The enzyme catalyses apo-[malonate decarboxylase ACP] + 2'-(5''-triphospho-alpha-D-ribosyl)-3'-dephospho-CoA = holo-[malonate decarboxylase ACP] + diphosphate. Its function is as follows. Transfers 2'-(5-triphosphoribosyl)-3'-dephosphocoenzyme-A to the apo-[acyl-carrier-protein] of the malonate decarboxylase to yield holo-[acyl-carrier-protein]. In Pseudomonas aeruginosa (strain ATCC 15692 / DSM 22644 / CIP 104116 / JCM 14847 / LMG 12228 / 1C / PRS 101 / PAO1), this protein is Phosphoribosyl-dephospho-CoA transferase.